We begin with the raw amino-acid sequence, 230 residues long: Protein CWC15 homolog B (230 aa).

Residues 1 to 126 (MTTAARPTFE…DEDSDDDTAA (126 aa)) are disordered. The segment covering 22–34 (DLSQLSKQYSSRD) has biased composition (polar residues). Positions 52-84 (EEVRSRDFRRELEERERVAVRDKNRDRPTREHT) are enriched in basic and acidic residues. Over residues 102 to 124 (DADDPLTDEDADEDSDEDSDDDT) the composition is skewed to acidic residues. A coiled-coil region spans residues 121–165 (DDDTAALLAELEKIKKERAEEQVRKELEQKAEEERIRMENILSGN).

This sequence belongs to the CWC15 family. As to quaternary structure, identified in the spliceosome C complex. Component of the minor spliceosome, which splices U12-type introns.

The protein resides in the nucleus. Its function is as follows. Involved in pre-mRNA splicing as component of the spliceosome. This chain is Protein CWC15 homolog B (cwc15-b), found in Xenopus laevis (African clawed frog).